A 248-amino-acid polypeptide reads, in one-letter code: Probable transcriptional regulatory protein Ecaj_0351 (248 aa).

The disordered stretch occupies residues 1-21 (MAGHSQFANIKHRKGAQDAKR).

This sequence belongs to the TACO1 family.

It localises to the cytoplasm. This chain is Probable transcriptional regulatory protein Ecaj_0351, found in Ehrlichia canis (strain Jake).